A 69-amino-acid polypeptide reads, in one-letter code: ATP synthase F(0) complex subunit e, mitochondrial (69 aa).

N6-acetyllysine is present on K34.

The protein belongs to the ATPase e subunit family. Component of the ATP synthase complex composed at least of ATP5F1A/subunit alpha, ATP5F1B/subunit beta, ATP5MC1/subunit c (homooctomer), MT-ATP6/subunit a, MT-ATP8/subunit 8, ATP5ME/subunit e, ATP5MF/subunit f, ATP5MG/subunit g, ATP5MK/subunit k, ATP5MJ/subunit j, ATP5F1C/subunit gamma, ATP5F1D/subunit delta, ATP5F1E/subunit epsilon, ATP5PF/subunit F6, ATP5PB/subunit b, ATP5PD/subunit d, ATP5PO/subunit OSCP. ATP synthase complex consists of a soluble F(1) head domain (subunits alpha(3) and beta(3)) - the catalytic core - and a membrane F(0) domain - the membrane proton channel (subunits c, a, 8, e, f, g, k and j). These two domains are linked by a central stalk (subunits gamma, delta, and epsilon) rotating inside the F1 region and a stationary peripheral stalk (subunits F6, b, d, and OSCP).

It is found in the mitochondrion. Its subcellular location is the mitochondrion inner membrane. Its function is as follows. Subunit e, of the mitochondrial membrane ATP synthase complex (F(1)F(0) ATP synthase or Complex V) that produces ATP from ADP in the presence of a proton gradient across the membrane which is generated by electron transport complexes of the respiratory chain. ATP synthase complex consist of a soluble F(1) head domain - the catalytic core - and a membrane F(1) domain - the membrane proton channel. These two domains are linked by a central stalk rotating inside the F(1) region and a stationary peripheral stalk. During catalysis, ATP synthesis in the catalytic domain of F(1) is coupled via a rotary mechanism of the central stalk subunits to proton translocation. In vivo, can only synthesize ATP although its ATP hydrolase activity can be activated artificially in vitro. Part of the complex F(0) domain. This Cricetulus longicaudatus (Long-tailed dwarf hamster) protein is ATP synthase F(0) complex subunit e, mitochondrial.